A 252-amino-acid chain; its full sequence is Trans-aconitate 2-methyltransferase (252 aa).

It belongs to the methyltransferase superfamily. Tam family.

The protein resides in the cytoplasm. It catalyses the reaction trans-aconitate + S-adenosyl-L-methionine = (E)-3-(methoxycarbonyl)pent-2-enedioate + S-adenosyl-L-homocysteine. Its function is as follows. Catalyzes the S-adenosylmethionine monomethyl esterification of trans-aconitate. This is Trans-aconitate 2-methyltransferase from Enterobacter sp. (strain 638).